A 60-amino-acid polypeptide reads, in one-letter code: UPF0434 protein PM0859 (60 aa).

It belongs to the UPF0434 family.

The sequence is that of UPF0434 protein PM0859 from Pasteurella multocida (strain Pm70).